Consider the following 292-residue polypeptide: Seed lectin (292 aa).

A signal peptide spans 1 to 37; it reads MATSNSRPHLLQTHKPFSVVLAISITFFLLLLNKVNS. N-linked (GlcNAc...) asparagine glycosylation is found at asparagine 82 and asparagine 154. Mn(2+) is bound by residues aspartate 163 and aspartate 165. Ca(2+) contacts are provided by aspartate 165, histidine 167, asparagine 169, and aspartate 172. Residues aspartate 172 and histidine 177 each coordinate Mn(2+). N-linked (GlcNAc...) asparagine glycosylation occurs at asparagine 186.

The protein belongs to the leguminous lectin family.

Mannose/glucose-specific lectin. The sequence is that of Seed lectin from Styphnolobium japonicum (Japanese pagoda tree).